A 42-amino-acid chain; its full sequence is Photosystem II reaction center protein J (42 aa).

A helical transmembrane segment spans residues 10 to 30 (IPLWLVGTVVGIAALTLLSVF).

Belongs to the PsbJ family. PSII is composed of 1 copy each of membrane proteins PsbA, PsbB, PsbC, PsbD, PsbE, PsbF, PsbH, PsbI, PsbJ, PsbK, PsbL, PsbM, PsbT, PsbX, PsbY, PsbZ, Psb30/Ycf12, at least 3 peripheral proteins of the oxygen-evolving complex and a large number of cofactors. It forms dimeric complexes.

The protein localises to the plastid. It localises to the chloroplast thylakoid membrane. In terms of biological role, one of the components of the core complex of photosystem II (PSII). PSII is a light-driven water:plastoquinone oxidoreductase that uses light energy to abstract electrons from H(2)O, generating O(2) and a proton gradient subsequently used for ATP formation. It consists of a core antenna complex that captures photons, and an electron transfer chain that converts photonic excitation into a charge separation. This Tupiella akineta (Green alga) protein is Photosystem II reaction center protein J.